We begin with the raw amino-acid sequence, 152 residues long: MSATLDAPSPSKPRIVLGFDFGLRYIGVAVGQEVTHSANPLTTLKAHEGNPDWNQITQLIRQWNPDLLIVGLPLNMDQSEQFLTKAARRFGHRLHGRYGLAVEWVDERLSTVEARERLNIKSSASGRRQGIDQMAAQCILQTWLTEQQTIRH.

It belongs to the YqgF nuclease family.

It is found in the cytoplasm. Could be a nuclease involved in processing of the 5'-end of pre-16S rRNA. The sequence is that of Putative pre-16S rRNA nuclease from Nitrosococcus oceani (strain ATCC 19707 / BCRC 17464 / JCM 30415 / NCIMB 11848 / C-107).